The sequence spans 242 residues: N-acetylmuramate alpha-1-phosphate uridylyltransferase (242 aa).

Residues 16 to 18 (GTR) and Lys28 each bind UTP. Substrate is bound at residue Asn113. Asp115 serves as a coordination point for Mg(2+). Asp158 is a binding site for substrate.

It belongs to the nucleotidyltransferase MurU family. As to quaternary structure, monomer. Requires Mg(2+) as cofactor.

The enzyme catalyses N-acetyl-alpha-D-muramate 1-phosphate + UDP + H(+) = UDP-N-acetyl-alpha-D-muramate + phosphate. It participates in cell wall biogenesis; peptidoglycan recycling. In terms of biological role, catalyzes the formation of UDP-N-acetylmuramate (UDP-MurNAc), a crucial precursor of the bacterial peptidoglycan cell wall, from UTP and MurNAc-alpha-1P. Is likely involved in peptidoglycan recycling as part of a cell wall recycling pathway that bypasses de novo biosynthesis of the peptidoglycan precursor UDP-MurNAc. Is able to complement the fosfomycin sensitivity phenotype of a P.putida mutant lacking murU. This is N-acetylmuramate alpha-1-phosphate uridylyltransferase from Caulobacter vibrioides (strain ATCC 19089 / CIP 103742 / CB 15) (Caulobacter crescentus).